We begin with the raw amino-acid sequence, 150 residues long: C-type lectin 16 (150 aa).

A signal peptide spans 1–27 (MKRVRVKVIFVSFGLLVVFLSLSGTAA). 3 disulfides stabilise this stretch: Cys-29-Cys-40, Cys-57-Cys-146, and Cys-123-Cys-138. In terms of domain architecture, C-type lectin spans 36 to 147 (YEGHCYKPFN…CRMLARFVCE (112 aa)).

This sequence belongs to the snaclec family. In terms of assembly, heteromultimer; disulfide-linked. In terms of tissue distribution, expressed by the venom gland.

It localises to the secreted. Interferes with one step of hemostasis (modulation of platelet aggregation, or coagulation cascade, for example). This Crotalus adamanteus (Eastern diamondback rattlesnake) protein is C-type lectin 16.